The primary structure comprises 325 residues: N-acetyl-gamma-glutamyl-phosphate reductase (325 aa).

Residue Cys131 is part of the active site.

It belongs to the NAGSA dehydrogenase family. Type 1 subfamily.

It localises to the cytoplasm. It carries out the reaction N-acetyl-L-glutamate 5-semialdehyde + phosphate + NADP(+) = N-acetyl-L-glutamyl 5-phosphate + NADPH + H(+). It participates in amino-acid biosynthesis; L-arginine biosynthesis; N(2)-acetyl-L-ornithine from L-glutamate: step 3/4. Its function is as follows. Catalyzes the NADPH-dependent reduction of N-acetyl-5-glutamyl phosphate to yield N-acetyl-L-glutamate 5-semialdehyde. The polypeptide is N-acetyl-gamma-glutamyl-phosphate reductase (Methylobacterium sp. (strain 4-46)).